The following is a 361-amino-acid chain: Mitogen-activated protein kinase 14A (361 aa).

Positions 25–309 (YQNLSPVGSG…AAEALAHPYF (285 aa)) constitute a Protein kinase domain. Residues 31 to 39 (VGSGAYGSV) and Lys54 each bind ATP. The active-site Proton acceptor is Asp169. Thr181 bears the Phosphothreonine; by MAP2K3 mark. A TXY motif is present at residues 181 to 183 (TGY). Tyr183 bears the Phosphotyrosine; by MAP2K3 mark.

The protein belongs to the protein kinase superfamily. CMGC Ser/Thr protein kinase family. MAP kinase subfamily. The cofactor is Mg(2+). Post-translationally, dually phosphorylated on Thr-181 and Tyr-183, which activates the enzyme.

The protein resides in the cytoplasm. The protein localises to the nucleus. It catalyses the reaction L-seryl-[protein] + ATP = O-phospho-L-seryl-[protein] + ADP + H(+). It carries out the reaction L-threonyl-[protein] + ATP = O-phospho-L-threonyl-[protein] + ADP + H(+). With respect to regulation, activated by threonine and tyrosine phosphorylation by the dual specificity kinase, MKK3. Its function is as follows. Serine/threonine kinase which acts as an essential component of the MAP kinase signal transduction pathway. Mapk14a is one of the four p38 MAPKs which play an important role in the cascades of cellular responses evoked by extracellular stimuli such as pro-inflammatory cytokines or physical stress leading to direct activation of transcription factors. Accordingly, p38 MAPKs phosphorylate a broad range of proteins and it has been estimated that they may have approximately 200 to 300 substrates each. Some of the targets are downstream kinases which are activated through phosphorylation and further phosphorylate additional targets. Required for cytokinesis on the future dorsal side of the blastodisc, suggesting a role in symmetrical and synchronous blastomere cleavage. The polypeptide is Mitogen-activated protein kinase 14A (mapk14a) (Danio rerio (Zebrafish)).